The sequence spans 2275 residues: Serine-rich adhesin for platelets (2275 aa).

An N-terminal signal peptide occupies residues 1 to 89; that stretch reads MSKRQKEFHD…VNMLHDQQAF (89 aa). The serine-rich repeat region 1, SRR1 stretch occupies residues 90–264; sequence AASDAPLTSE…TANTITVNKD (175 aa). Residues 100-111 show a composition bias toward polar residues; it reads LNTQSETVGNQN. Disordered stretches follow at residues 100–229 and 751–2247; these read LNTQ…STST and NSMS…GLLG. The span at 112–128 shows a compositional bias: low complexity; it reads STTIEASTSTADSTSVT. A compositionally biased stretch (polar residues) spans 129–140; that stretch reads KNSSSVQTSNSD. Over residues 150–229 the composition is skewed to low complexity; it reads VTSTTNSTSN…NKTSTTSTST (80 aa). The non-repeat region (NRR) stretch occupies residues 265 to 751; that stretch reads NLKQYMTTSG…TTFKYEVTRN (487 aa). Low complexity-rich tracts occupy residues 752 to 1392 and 1402 to 2218; these read SMSD…LSLS and SNSA…ATSE. Residues 752–2236 form a serine-rich repeat region 2, SRR2 region; the sequence is SMSDSVSTSG…AQSEKRLPDT (1485 aa). An LPXTG sorting signal motif is present at residues 2233-2237; it reads LPDTG. Pentaglycyl murein peptidoglycan amidated threonine is present on Thr-2236. Positions 2237 to 2275 are cleaved as a propeptide — removed by sortase; sequence GDSIKQNGLLGGVMTLLVGLGLMKRKKKKDENDQDDSQA.

The protein belongs to the serine-rich repeat protein (SRRP) family. In terms of assembly, interacts with human gp-340 (DMBT1). Proteolytically cleaved by a metalloprotease. In terms of processing, glycosylated. It is probable that most of the Ser residues in SSR1 and SSR2 are O-GlcNAcylated. Sequential glycosylation by sugar transferases are able to generate complex sugar polymorphisms.

It is found in the secreted. The protein localises to the cell wall. Functionally, mediates binding to human platelets, possibly through a receptor-ligand interaction. Probably associated with virulence in endovascular infection. Interacts with host (human) gp-340 via the non-repeat region (NRR or binding region). Binding is inhibited by N-acetylneuraminic acid (NeuAc). The sequence is that of Serine-rich adhesin for platelets (sraP) from Staphylococcus aureus (strain MW2).